Reading from the N-terminus, the 123-residue chain is Protein Wnt-7b (123 aa).

Residue Ser-1 is the site of O-palmitoleoyl serine; by PORCN attachment. The segment at 33–61 (VEVVRASRLRQPTFLKIKQIRSYQKPMET) is disordered linker. A disulfide bridge connects residues Cys-89 and Cys-104. N-linked (GlcNAc...) asparagine glycosylation occurs at Asn-90.

It belongs to the Wnt family. Post-translationally, palmitoleoylation is required for efficient binding to frizzled receptors. Depalmitoleoylation leads to Wnt signaling pathway inhibition.

It localises to the secreted. It is found in the extracellular space. The protein resides in the extracellular matrix. Functionally, ligand for members of the frizzled family of seven transmembrane receptors that functions in the canonical Wnt/beta-catenin signaling pathway. Required for normal fusion of the chorion and the allantois during placenta development. Required for central nervous system (CNS) angiogenesis and blood-brain barrier regulation. The protein is Protein Wnt-7b (WNT-7B) of Sceloporus occidentalis (Western fence lizard).